The sequence spans 377 residues: Erythronate-4-phosphate dehydrogenase (377 aa).

S45 and T67 together coordinate substrate. Residues 127–128 (QV), D147, and T176 contribute to the NAD(+) site. The active site involves R209. D233 lines the NAD(+) pocket. Residue E238 is part of the active site. Catalysis depends on H255, which acts as the Proton donor. G258 is a binding site for NAD(+). Residue Y259 participates in substrate binding.

The protein belongs to the D-isomer specific 2-hydroxyacid dehydrogenase family. PdxB subfamily. As to quaternary structure, homodimer.

It is found in the cytoplasm. The catalysed reaction is 4-phospho-D-erythronate + NAD(+) = (R)-3-hydroxy-2-oxo-4-phosphooxybutanoate + NADH + H(+). It participates in cofactor biosynthesis; pyridoxine 5'-phosphate biosynthesis; pyridoxine 5'-phosphate from D-erythrose 4-phosphate: step 2/5. Functionally, catalyzes the oxidation of erythronate-4-phosphate to 3-hydroxy-2-oxo-4-phosphonooxybutanoate. This chain is Erythronate-4-phosphate dehydrogenase, found in Vibrio atlanticus (strain LGP32) (Vibrio splendidus (strain Mel32)).